The chain runs to 170 residues: Protein SprT (170 aa).

The SprT-like domain occupies 22-163 (LQQANLTLQT…RCRRCGKTLR (142 aa)). H78 contacts Zn(2+). The active site involves E79. H82 contributes to the Zn(2+) binding site.

This sequence belongs to the SprT family. Requires Zn(2+) as cofactor.

The protein resides in the cytoplasm. This is Protein SprT from Pectobacterium atrosepticum (strain SCRI 1043 / ATCC BAA-672) (Erwinia carotovora subsp. atroseptica).